A 598-amino-acid chain; its full sequence is Serine hydroxymethyltransferase 7 (598 aa).

The segment at 57–85 (QLLEQKAEKTTTVDEPKKDGGGGGDQKED) is disordered. Positions 61–85 (QKAEKTTTVDEPKKDGGGGGDQKED) are enriched in basic and acidic residues. An N6-(pyridoxal phosphate)lysine modification is found at lysine 370.

It belongs to the SHMT family. In terms of assembly, homotetramer. Pyridoxal 5'-phosphate is required as a cofactor.

It is found in the cytoplasm. The catalysed reaction is (6R)-5,10-methylene-5,6,7,8-tetrahydrofolate + glycine + H2O = (6S)-5,6,7,8-tetrahydrofolate + L-serine. It participates in one-carbon metabolism; tetrahydrofolate interconversion. Functionally, catalyzes the interconversion of serine and glycine. The chain is Serine hydroxymethyltransferase 7 (SHM7) from Arabidopsis thaliana (Mouse-ear cress).